Consider the following 448-residue polypeptide: Bifunctional F420 biosynthesis protein FbiB (448 aa).

The coenzyme F420:L-glutamate ligase stretch occupies residues 1 to 244 (MTGPEHGSAS…PGANDLFWLG (244 aa)). Residues 20 to 23 (LPEF), S50, and K55 contribute to the GTP site. D109 contacts a divalent metal cation. N112 contributes to the GTP binding site. The a divalent metal cation site is built by D150 and T151. The interval 245 to 448 (TAEALELGRQ…VPAADLLILK (204 aa)) is dehydro-coenzyme F420-0 reductase. Residues 260–264 (RRSVR) and A288 contribute to the FMN site. D320 provides a ligand contact to coenzyme F420-(gamma-Glu)n. FMN contacts are provided by G399 and R436.

This sequence in the N-terminal section; belongs to the CofE family. Requires Mg(2+) as cofactor. Mn(2+) serves as cofactor. K(+) is required as a cofactor.

It catalyses the reaction oxidized coenzyme F420-0 + GTP + L-glutamate = oxidized coenzyme F420-1 + GDP + phosphate + H(+). It carries out the reaction oxidized coenzyme F420-1 + GTP + L-glutamate = oxidized coenzyme F420-2 + GDP + phosphate + H(+). The enzyme catalyses oxidized coenzyme F420-(gamma-L-Glu)(n) + GTP + L-glutamate = oxidized coenzyme F420-(gamma-L-Glu)(n+1) + GDP + phosphate + H(+). The catalysed reaction is oxidized coenzyme F420-0 + FMN + H(+) = dehydro coenzyme F420-0 + FMNH2. It functions in the pathway cofactor biosynthesis; coenzyme F420 biosynthesis. In terms of biological role, bifunctional enzyme that catalyzes the GTP-dependent successive addition of multiple gamma-linked L-glutamates to the L-lactyl phosphodiester of 7,8-didemethyl-8-hydroxy-5-deazariboflavin (F420-0) to form polyglutamated F420 derivatives, and the FMNH2-dependent reduction of dehydro-F420-0 to form F420-0. The sequence is that of Bifunctional F420 biosynthesis protein FbiB from Mycobacterium tuberculosis (strain ATCC 25177 / H37Ra).